The sequence spans 31 residues: Cytochrome b6-f complex subunit 6 (31 aa).

The helical transmembrane segment at 4–24 (ITSYFGFLLVALTITSALFIG) threads the bilayer.

It belongs to the PetL family. As to quaternary structure, the 4 large subunits of the cytochrome b6-f complex are cytochrome b6, subunit IV (17 kDa polypeptide, PetD), cytochrome f and the Rieske protein, while the 4 small subunits are PetG, PetL, PetM and PetN. The complex functions as a dimer.

The protein localises to the plastid. It is found in the chloroplast thylakoid membrane. Functionally, component of the cytochrome b6-f complex, which mediates electron transfer between photosystem II (PSII) and photosystem I (PSI), cyclic electron flow around PSI, and state transitions. PetL is important for photoautotrophic growth as well as for electron transfer efficiency and stability of the cytochrome b6-f complex. This is Cytochrome b6-f complex subunit 6 from Pelargonium hortorum (Common geranium).